Here is a 447-residue protein sequence, read N- to C-terminus: UPF0210 protein LSEI_0897 (447 aa).

The protein belongs to the UPF0210 family. As to quaternary structure, homodimer.

This chain is UPF0210 protein LSEI_0897, found in Lacticaseibacillus paracasei (strain ATCC 334 / BCRC 17002 / CCUG 31169 / CIP 107868 / KCTC 3260 / NRRL B-441) (Lactobacillus paracasei).